Consider the following 507-residue polypeptide: Protein zntA (507 aa).

Positions 1–18 (MSIFAYSILAGLAPLLSS) are cleaved as a signal peptide. An N-linked (GlcNAc...) asparagine glycan is attached at Asn31. Residues 35–55 (FHILLCISAGLLFAVASLELI) form a helical membrane-spanning segment. The tract at residues 124-179 (GLNLNNLNQATNLDNNEEDNDNLDNDGENEIENDHDHDHQEDEGGDNDHDHESEEK) is disordered. Residues 125–137 (LNLNNLNQATNLD) show a composition bias toward low complexity. Residues 138–154 (NNEEDNDNLDNDGENEI) show a composition bias toward acidic residues. Basic and acidic residues predominate over residues 155–179 (ENDHDHDHQEDEGGDNDHDHESEEK). Residues 185 to 205 (IPMYGIGFGFAILIIVESIFS) traverse the membrane as a helical segment. The tract at residues 209–264 (GGGGGGGHHSHSHGSLSSSSSNDVISDYISNNNSNNINNNDDDNNNNNNNNDDDDD) is disordered. Over residues 221–258 (HGSLSSSSSNDVISDYISNNNSNNINNNDDDNNNNNNN) the composition is skewed to low complexity. Asn240, Asn298, Asn328, Asn342, and Asn351 each carry an N-linked (GlcNAc...) asparagine glycan. The tract at residues 305-350 (PNIASPVMNKDNNNNDKDKNRNSNKSDIKNSGSINNGNNSGNNNNN) is disordered. A compositionally biased stretch (basic and acidic residues) spans 317 to 332 (NNNDKDKNRNSNKSDI). The span at 333–350 (KNSGSINNGNNSGNNNNN) shows a compositional bias: low complexity. Transmembrane regions (helical) follow at residues 355-375 (LTITTFIALSIHSFVDGVVIS), 388-408 (VALAIVIHKIPDGLVLSSLIL), 422-442 (FFYFLLISCMTPLGSFISSFL), 451-471 (GAFVLGFGAGTFIYITSTAIL), and 486-506 (LFSIFLGYLLFIFLDSQFHGA).

The protein belongs to the ZIP transporter (TC 2.A.5) family.

It localises to the membrane. Its function is as follows. May transport divalent cations. May participate, with dstA, in the regulation of the differentiation of stalk cells during development. This Dictyostelium discoideum (Social amoeba) protein is Protein zntA (zntA).